The primary structure comprises 169 residues: Protein FAM106A (169 aa).

It belongs to the FAM106 family.

This chain is Protein FAM106A (FAM106A), found in Homo sapiens (Human).